The following is a 90-amino-acid chain: Aminoacyl carrier protein 1 (90 aa).

The Carrier domain occupies 6–84 (TDVRNRIIKL…TLERMVMTQL (79 aa)). An O-(pantetheine 4'-phosphoryl)serine modification is found at Ser-42.

In terms of processing, 4'-phosphopantetheine is transferred from CoA to a specific serine of the apo-form of this carrier protein.

Its function is as follows. Aminoacyl carrier protein. Can be charged with L-glycine via the formation of a thioester bond between the amino acid and the 4'-phosphopantetheinyl prosthetic group, catalyzed by the bll0957 ligase. The polypeptide is Aminoacyl carrier protein 1 (Bradyrhizobium diazoefficiens (strain JCM 10833 / BCRC 13528 / IAM 13628 / NBRC 14792 / USDA 110)).